We begin with the raw amino-acid sequence, 429 residues long: Glycine betaine monooxygenase oxygenase subunit (429 aa).

The 108-residue stretch at 56–163 folds into the Rieske domain; the sequence is WLIAGMTCEI…VKTAGGYIFI (108 aa). [2Fe-2S] cluster is bound by residues C98, H100, C118, and H121. Fe cation contacts are provided by H217 and H222.

Belongs to the bacterial ring-hydroxylating dioxygenase alpha subunit family. In terms of assembly, the system is composed of an oxygenase subunit (GbcA) and a reductase subunit (GbcB). Requires [2Fe-2S] cluster as cofactor. The cofactor is Fe cation.

The enzyme catalyses glycine betaine + NADH + O2 + H(+) = N,N-dimethylglycine + formaldehyde + NAD(+) + H2O. Its function is as follows. Involved in degradation of glycine betaine. Part of a Rieske-type oxygenase system that catalyzes the conversion of glycine betaine (GB) to dimethylglycine (DMG). This subunit is the terminal oxygenase component of the system. Required for growth on choline and GB, but not for growth on DMG. The sequence is that of Glycine betaine monooxygenase oxygenase subunit from Pseudomonas aeruginosa (strain ATCC 15692 / DSM 22644 / CIP 104116 / JCM 14847 / LMG 12228 / 1C / PRS 101 / PAO1).